Here is a 508-residue protein sequence, read N- to C-terminus: Steroid 17-alpha-hydroxylase/17,20 lyase (508 aa).

A heme-binding site is contributed by C445.

The protein belongs to the cytochrome P450 family. Heme serves as cofactor.

It localises to the membrane. The catalysed reaction is a C21-steroid + reduced [NADPH--hemoprotein reductase] + O2 = a 17alpha-hydroxy-C21-steroid + oxidized [NADPH--hemoprotein reductase] + H2O + H(+). It catalyses the reaction 17alpha-hydroxyprogesterone + reduced [NADPH--hemoprotein reductase] + O2 = androst-4-ene-3,17-dione + acetate + oxidized [NADPH--hemoprotein reductase] + H2O + 2 H(+). The enzyme catalyses 17alpha-hydroxypregnenolone + reduced [NADPH--hemoprotein reductase] + O2 = 3beta-hydroxyandrost-5-en-17-one + acetate + oxidized [NADPH--hemoprotein reductase] + H2O + 2 H(+). Its pathway is lipid metabolism; steroid biosynthesis. Its function is as follows. Conversion of pregnenolone and progesterone to their 17-alpha-hydroxylated products and subsequently to dehydroepiandrosterone (DHEA) and androstenedione. Catalyzes both the 17-alpha-hydroxylation and the 17,20-lyase reaction. The chain is Steroid 17-alpha-hydroxylase/17,20 lyase (CYP17A1) from Gallus gallus (Chicken).